A 360-amino-acid chain; its full sequence is Inhibin alpha chain (360 aa).

An N-terminal signal peptide occupies residues 1–17; that stretch reads MWLQLLLLLLAPQGGHG. A propeptide spanning residues 18-60 is cleaved from the precursor; it reads CHGLELDRELVLAKVRALFLDALGPPPVTGEGGDPGVRRLHRR. The propeptide at 61 to 226 is inhibin alpha N-terminal region; that stretch reads HAVGGFMRRG…PPSGGERARR (166 aa). N140 and N262 each carry an N-linked (GlcNAc...) asparagine glycan. 3 disulfides stabilise this stretch: C256-C322, C285-C357, and C289-C359.

Belongs to the TGF-beta family. Dimeric, linked by one or more disulfide bonds. Activin B is a dimer of alpha and beta-B. Inhibin A is a dimer of alpha and beta-A. Inhibin B is a dimer of alpha and beta-B. Interacts with TGFBR3L; this interaction regulates female fertility. In terms of processing, proteolytic processing yields a number of bioactive forms, consisting either solely of the mature alpha chain, of the most N-terminal propeptide linked through a disulfide bond to the mature alpha chain, or of the entire proprotein.

The protein localises to the secreted. Its function is as follows. Inhibins and activins inhibit and activate, respectively, the secretion of follitropin by the pituitary gland. Inhibins/activins are involved in regulating a number of diverse functions such as hypothalamic and pituitary hormone secretion, gonadal hormone secretion, germ cell development and maturation, erythroid differentiation, insulin secretion, nerve cell survival, embryonic axial development or bone growth, depending on their subunit composition. Inhibins appear to oppose the functions of activins. Functionally, inhibin A is a dimer of alpha/INHA and beta-A/INHBA that functions as a feedback regulator in the hypothalamic-pituitary-gonadal (HPG) axis. Inhibits the secretion of FSH from the anterior pituitary gland by acting on pituitary gonadotrope cells. Antagonizes activin A by binding to the proteoglycan, betaglycan, and forming a stable complex with and, thereby, sequestering type II activin receptors while excluding type I receptor. Inhibin B is a dimer of alpha and beta-B that plays a crucial role in the regulation of the reproductive system by inhibiting the secretion of follicle-stimulating hormone (FSH) from the anterior pituitary gland. Thereby, maintains reproductive homeostasis in both males and females. Acts as a more potent suppressor of FSH release than inhibin A. Functions as competitive receptor antagonist binding activin type II receptors with high affinity in the presence of the TGF-beta type III coreceptor/TGFBR3L. This chain is Inhibin alpha chain (INHA), found in Bos taurus (Bovine).